A 92-amino-acid chain; its full sequence is MQVSTAALAVLLCTVALCNRISATFAADTPTSCCFSYISRQIPQNFIADYFETNSQCSKPGVIFLTKRGRQVCADPSKEWVQKYVSDLELSA.

An N-terminal signal peptide occupies residues 1-26 (MQVSTAALAVLLCTVALCNRISATFA). 2 disulfide bridges follow: Cys33-Cys57 and Cys34-Cys73.

This sequence belongs to the intercrine beta (chemokine CC) family. In terms of assembly, self-associates. Also heterodimer of MIP-1-alpha(4-69) and MIP-1-beta(3-69). Interacts with CCR1.

Its subcellular location is the secreted. Monokine with inflammatory and chemokinetic properties. Binds to CCR1, CCR4 and CCR5. One of the major HIV-suppressive factors produced by CD8+ T-cells. Recombinant MIP-1-alpha induces a dose-dependent inhibition of different strains of HIV-1, HIV-2, and simian immunodeficiency virus (SIV). This chain is C-C motif chemokine 3 (CCL3), found in Macaca mulatta (Rhesus macaque).